We begin with the raw amino-acid sequence, 539 residues long: Protein pim1 (539 aa).

Positions 1 to 53 are disordered; the sequence is MTSNRSTRSSTKREEVSKNGVEKRELDESDVMKNGKKPVKRAKVSSLPKPVRV. Positions 11–33 are enriched in basic and acidic residues; that stretch reads TKREEVSKNGVEKRELDESDVMK. Residues 34–43 show a composition bias toward basic residues; the sequence is NGKKPVKRAK. 7 RCC1 repeats span residues 70–125, 127–191, 192–243, 244–296, 298–353, 354–417, and 419–472; these read RLNV…ALSH, GRVY…AITD, NGCC…ALTT, TGKV…AIDN, GRVY…ALLE, DGRV…AVTS, and GKVY…IAGI. The disordered stretch occupies residues 478 to 539; sequence EPVANGIKSE…SVLEPSSTTA (62 aa). Basic and acidic residues predominate over residues 486–504; the sequence is SEPENEKKLKTEETSKTDD. Polar residues predominate over residues 514–525; it reads VTSNGEPSTATS.

Oligomer of dis3, pim1 and spi1. Interacts with ned1.

The protein localises to the nucleus. Promotes the exchange of Ran(spi1)-bound GDP by GTP. Involved in the control of mitosis. Regulates a variety of nuclear events, including mitotic check-point, chromosome decondensation and mRNA processing/transport. The sequence is that of Protein pim1 (pim1) from Schizosaccharomyces pombe (strain 972 / ATCC 24843) (Fission yeast).